The sequence spans 85 residues: Depressant scorpion toxin BmKIM (85 aa).

The first 21 residues, 1-21 (MKLFLLLVFFASMLIDGLVNA), serve as a signal peptide directing secretion. The region spanning 22–82 (DGYIRGSNGC…TWKSESNTCG (61 aa)) is the LCN-type CS-alpha/beta domain. Cystine bridges form between Cys-31–Cys-81, Cys-35–Cys-56, Cys-42–Cys-63, and Cys-46–Cys-65. Residue Gly-82 is modified to Glycine amide.

This sequence belongs to the long (4 C-C) scorpion toxin superfamily. Sodium channel inhibitor family. In terms of tissue distribution, expressed by the venom gland.

It localises to the secreted. Causes a slow progressive depressant flaccid paralysis, when injected into S.falculata blowfly larvae. Inhibits dose-dependently the total sodium (Nav) currents both in dorsal root ganglia neurons and in ventricular myocytes. Is toxic to mice by intravenous injection, but not by subcutaneous or intracerebroventricular injection. Produces antiarrhythmia in rat. Is then active on both mammals and insects. The protein is Depressant scorpion toxin BmKIM (KIM2) of Olivierus martensii (Manchurian scorpion).